The primary structure comprises 120 residues: Cell division protein FtsL (120 aa).

The tract at residues 1-22 (MSNVAYKSNLEPNRVHREAEQP) is disordered. The Cytoplasmic segment spans residues 1–37 (MSNVAYKSNLEPNRVHREAEQPKKQILKRGQMTLGEK). The span at 13 to 22 (NRVHREAEQP) shows a compositional bias: basic and acidic residues. A helical transmembrane segment spans residues 38 to 58 (VIITIALAIVLVVAFRIISVQ). Residues 59-120 (AQIYTVNQEI…GDNVKVVDGQ (62 aa)) are Extracellular-facing.

The protein belongs to the FtsL family.

Its subcellular location is the cell membrane. Essential cell division protein. The polypeptide is Cell division protein FtsL (Listeria monocytogenes serovar 1/2a (strain ATCC BAA-679 / EGD-e)).